Reading from the N-terminus, the 127-residue chain is Major sperm protein 77/79 (127 aa).

At alanine 2 the chain carries N-acetylalanine. Residues 9–126 (DIQTQPGTKI…RRKNLPIEYN (118 aa)) form the MSP domain.

Sperm.

The protein resides in the cell projection. Its subcellular location is the pseudopodium. The protein localises to the cytoplasm. It localises to the cytoskeleton. Its function is as follows. Central component in molecular interactions underlying sperm crawling. Forms an extensive filament system that extends from sperm villipoda, along the leading edge of the pseudopod. In Caenorhabditis elegans, this protein is Major sperm protein 77/79 (msp-77).